We begin with the raw amino-acid sequence, 149 residues long: Ribosome-binding factor A (149 aa).

The protein belongs to the RbfA family. In terms of assembly, monomer. Binds 30S ribosomal subunits, but not 50S ribosomal subunits or 70S ribosomes.

The protein localises to the cytoplasm. In terms of biological role, one of several proteins that assist in the late maturation steps of the functional core of the 30S ribosomal subunit. Associates with free 30S ribosomal subunits (but not with 30S subunits that are part of 70S ribosomes or polysomes). Required for efficient processing of 16S rRNA. May interact with the 5'-terminal helix region of 16S rRNA. In Caulobacter vibrioides (strain ATCC 19089 / CIP 103742 / CB 15) (Caulobacter crescentus), this protein is Ribosome-binding factor A.